Reading from the N-terminus, the 267-residue chain is MIALSNALSRVFGSVAGYEFPSFIQKGINALYVKIFKIDLSEFEPLENYKSLNALFTRSLKKERPFDKTPNACIAPCDALITECAFLDNDSALQIKGMPYKAHELVGEINPLSPSFFYVNFYLSPKDYHHYHAPCDLEILEARCFAGKLLPVNKPSLHKNKNLFVGNERVALVAKDIQGNRLYFVAVGALNVGKMRFNFDKNIQTNAKAHLTQAYSYNPPIKVKKGDNLGNFEMGSTIVLFVQNTAFKDLKEKSVKFGESIGEFHAN.

Residues aspartate 78, histidine 132, and serine 236 each act as charge relay system; for autoendoproteolytic cleavage activity in the active site. Serine 236 serves as the catalytic Schiff-base intermediate with substrate; via pyruvic acid; for decarboxylase activity. Position 236 is a pyruvic acid (Ser); by autocatalysis (serine 236).

It belongs to the phosphatidylserine decarboxylase family. PSD-B subfamily. Prokaryotic type I sub-subfamily. Heterodimer of a large membrane-associated beta subunit and a small pyruvoyl-containing alpha subunit. Pyruvate serves as cofactor. In terms of processing, is synthesized initially as an inactive proenzyme. Formation of the active enzyme involves a self-maturation process in which the active site pyruvoyl group is generated from an internal serine residue via an autocatalytic post-translational modification. Two non-identical subunits are generated from the proenzyme in this reaction, and the pyruvate is formed at the N-terminus of the alpha chain, which is derived from the carboxyl end of the proenzyme. The autoendoproteolytic cleavage occurs by a canonical serine protease mechanism, in which the side chain hydroxyl group of the serine supplies its oxygen atom to form the C-terminus of the beta chain, while the remainder of the serine residue undergoes an oxidative deamination to produce ammonia and the pyruvoyl prosthetic group on the alpha chain. During this reaction, the Ser that is part of the protease active site of the proenzyme becomes the pyruvoyl prosthetic group, which constitutes an essential element of the active site of the mature decarboxylase.

The protein localises to the cell membrane. The enzyme catalyses a 1,2-diacyl-sn-glycero-3-phospho-L-serine + H(+) = a 1,2-diacyl-sn-glycero-3-phosphoethanolamine + CO2. Its pathway is phospholipid metabolism; phosphatidylethanolamine biosynthesis; phosphatidylethanolamine from CDP-diacylglycerol: step 2/2. Functionally, catalyzes the formation of phosphatidylethanolamine (PtdEtn) from phosphatidylserine (PtdSer). The chain is Phosphatidylserine decarboxylase proenzyme from Helicobacter pylori (strain Shi470).